Here is a 359-residue protein sequence, read N- to C-terminus: 3-dehydroquinate synthase (359 aa).

Residues 70–75, 104–108, 128–129, Lys141, and Lys150 each bind NAD(+); these read DAEGGK, GAATD, and TT. Positions 183, 246, and 262 each coordinate Zn(2+).

This sequence belongs to the sugar phosphate cyclases superfamily. Dehydroquinate synthase family. The cofactor is Co(2+). Zn(2+) is required as a cofactor. NAD(+) serves as cofactor.

The protein resides in the cytoplasm. It catalyses the reaction 7-phospho-2-dehydro-3-deoxy-D-arabino-heptonate = 3-dehydroquinate + phosphate. Its pathway is metabolic intermediate biosynthesis; chorismate biosynthesis; chorismate from D-erythrose 4-phosphate and phosphoenolpyruvate: step 2/7. Its function is as follows. Catalyzes the conversion of 3-deoxy-D-arabino-heptulosonate 7-phosphate (DAHP) to dehydroquinate (DHQ). This chain is 3-dehydroquinate synthase, found in Mycolicibacterium gilvum (strain PYR-GCK) (Mycobacterium gilvum (strain PYR-GCK)).